A 751-amino-acid polypeptide reads, in one-letter code: Photosystem I P700 chlorophyll a apoprotein A1 (751 aa).

A run of 8 helical transmembrane segments spans residues 72–95 (IFSA…FHGA), 158–181 (LYCT…FHYH), 197–221 (MNHH…HVSM), 293–311 (TAHH…GHMY), 348–371 (WHAQ…QHMY), 387–413 (LSLF…IFMV), 435–457 (AIIS…LYIH), and 532–550 (FMVH…LILL). Positions 574 and 583 each coordinate [4Fe-4S] cluster. 2 consecutive transmembrane segments (helical) span residues 590–611 (HVFL…HFSW) and 665–687 (LSAY…MFLF). His-676 is a chlorophyll a' binding site. Positions 684 and 692 each coordinate chlorophyll a. Trp-693 is a phylloquinone binding site. Residues 725–745 (AVGVAHYLLGGIVTTWAFFLA) traverse the membrane as a helical segment.

The protein belongs to the PsaA/PsaB family. In terms of assembly, the PsaA/B heterodimer binds the P700 chlorophyll special pair and subsequent electron acceptors. PSI consists of a core antenna complex that captures photons, and an electron transfer chain that converts photonic excitation into a charge separation. The cyanobacterial PSI reaction center is composed of one copy each of PsaA,B,C,D,E,F,I,J,K,L,M and X, and forms trimeric complexes. The cofactor is PSI electron transfer chain: 5 chlorophyll a, 1 chlorophyll a', 2 phylloquinones and 3 4Fe-4S clusters. PSI core antenna: 90 chlorophyll a, 22 carotenoids, 3 phospholipids and 1 galactolipid. P700 is a chlorophyll a/chlorophyll a' dimer, A0 is one or more chlorophyll a, A1 is one or both phylloquinones and FX is a shared 4Fe-4S iron-sulfur center..

It is found in the cellular thylakoid membrane. The catalysed reaction is reduced [plastocyanin] + hnu + oxidized [2Fe-2S]-[ferredoxin] = oxidized [plastocyanin] + reduced [2Fe-2S]-[ferredoxin]. Its function is as follows. PsaA and PsaB bind P700, the primary electron donor of photosystem I (PSI), as well as the electron acceptors A0, A1 and FX. PSI is a plastocyanin/cytochrome c6-ferredoxin oxidoreductase, converting photonic excitation into a charge separation, which transfers an electron from the donor P700 chlorophyll pair to the spectroscopically characterized acceptors A0, A1, FX, FA and FB in turn. Oxidized P700 is reduced on the lumenal side of the thylakoid membrane by plastocyanin or cytochrome c6. The sequence is that of Photosystem I P700 chlorophyll a apoprotein A1 from Synechocystis sp. (strain ATCC 27184 / PCC 6803 / Kazusa).